The following is a 218-amino-acid chain: Pyridoxine/pyridoxamine 5'-phosphate oxidase (218 aa).

Substrate contacts are provided by residues 14 to 17 and lysine 72; that span reads RREY. FMN-binding positions include 67–72, 82–83, arginine 88, lysine 89, and glutamine 111; these read RIVLLK and YT. Substrate is bound by residues tyrosine 129, arginine 133, and serine 137. Residues 146 to 147 and tryptophan 191 contribute to the FMN site; that span reads QS. 197–199 contributes to the substrate binding site; that stretch reads RLH. Arginine 201 is an FMN binding site.

This sequence belongs to the pyridoxamine 5'-phosphate oxidase family. As to quaternary structure, homodimer. FMN is required as a cofactor.

It carries out the reaction pyridoxamine 5'-phosphate + O2 + H2O = pyridoxal 5'-phosphate + H2O2 + NH4(+). It catalyses the reaction pyridoxine 5'-phosphate + O2 = pyridoxal 5'-phosphate + H2O2. It functions in the pathway cofactor metabolism; pyridoxal 5'-phosphate salvage; pyridoxal 5'-phosphate from pyridoxamine 5'-phosphate: step 1/1. It participates in cofactor metabolism; pyridoxal 5'-phosphate salvage; pyridoxal 5'-phosphate from pyridoxine 5'-phosphate: step 1/1. Catalyzes the oxidation of either pyridoxine 5'-phosphate (PNP) or pyridoxamine 5'-phosphate (PMP) into pyridoxal 5'-phosphate (PLP). The protein is Pyridoxine/pyridoxamine 5'-phosphate oxidase of Enterobacter sp. (strain 638).